Consider the following 322-residue polypeptide: 2-methylene-furan-3-one reductase (322 aa).

NADP(+) is bound by residues lysine 59, glycine 174 to valine 175, serine 197 to lysine 200, tyrosine 215, isoleucine 253, phenylalanine 264 to leucine 266, and arginine 311 to alanine 312. Residue lysine 59 coordinates substrate.

This sequence belongs to the zinc-containing alcohol dehydrogenase family. Quinone oxidoreductase subfamily. Monomer.

It carries out the reaction 4-hydroxy-2,5-dimethyl-furan-3(2H)-one + NADP(+) = 4-hydroxy-5-methyl-2-methylenefuran-3(2H)-one + NADPH + H(+). Its function is as follows. Enone oxidoreductase involved in the biosynthesis of 4-hydroxy-2,5-dimethyl-3(2H)-furanone (HDMF or furaneol), the key flavor compound in strawberries. This is 2-methylene-furan-3-one reductase (EO) from Fragaria vesca (Woodland strawberry).